A 333-amino-acid polypeptide reads, in one-letter code: 1D-myo-inositol 2-acetamido-2-deoxy-alpha-D-glucopyranoside deacetylase (333 aa).

3 residues coordinate Zn(2+): His-18, Asp-21, and His-165.

This sequence belongs to the MshB deacetylase family. The cofactor is Zn(2+).

It catalyses the reaction 1D-myo-inositol 2-acetamido-2-deoxy-alpha-D-glucopyranoside + H2O = 1D-myo-inositol 2-amino-2-deoxy-alpha-D-glucopyranoside + acetate. Its function is as follows. Catalyzes the deacetylation of 1D-myo-inositol 2-acetamido-2-deoxy-alpha-D-glucopyranoside (GlcNAc-Ins) in the mycothiol biosynthesis pathway. This Corynebacterium jeikeium (strain K411) protein is 1D-myo-inositol 2-acetamido-2-deoxy-alpha-D-glucopyranoside deacetylase.